A 274-amino-acid chain; its full sequence is Penicillin-insensitive murein endopeptidase (274 aa).

The first 19 residues, 1–19 (MKKTAIALLAWFVSSASLA), serve as a signal peptide directing secretion. 3 cysteine pairs are disulfide-bonded: Cys44-Cys265, Cys187-Cys235, and Cys216-Cys223. Zn(2+)-binding residues include His110, His113, Asp120, Asp147, His150, and His211. The interval 225-274 (DQPLPPPGDGCGAELQSWFEPPKPGTTKPEKKTPPPLPPSCQALLDEHVL) is disordered.

The protein belongs to the peptidase M74 family. Dimer. It depends on Zn(2+) as a cofactor.

Its subcellular location is the periplasm. Functionally, murein endopeptidase that cleaves the D-alanyl-meso-2,6-diamino-pimelyl amide bond that connects peptidoglycan strands. Likely plays a role in the removal of murein from the sacculus. The protein is Penicillin-insensitive murein endopeptidase of Salmonella heidelberg (strain SL476).